The chain runs to 214 residues: Adenylate kinase (214 aa).

10 to 15 (GAGKGT) contacts ATP. The tract at residues 30-59 (STGDMLRAAIKAGTELGKQAKSVIDAGQLV) is NMP. AMP-binding positions include threonine 31, arginine 36, 57 to 59 (QLV), 85 to 88 (GFPR), and glutamine 92. Residues 122 to 159 (GRRAHLASGRTYHNVYNPPKVEGKDDVTGEDLVIREDD) form an LID region. ATP-binding positions include arginine 123 and 132 to 133 (TY). 2 residues coordinate AMP: arginine 156 and arginine 167. ATP is bound at residue lysine 200.

It belongs to the adenylate kinase family. As to quaternary structure, monomer.

The protein resides in the cytoplasm. The enzyme catalyses AMP + ATP = 2 ADP. It functions in the pathway purine metabolism; AMP biosynthesis via salvage pathway; AMP from ADP: step 1/1. Catalyzes the reversible transfer of the terminal phosphate group between ATP and AMP. Plays an important role in cellular energy homeostasis and in adenine nucleotide metabolism. The chain is Adenylate kinase from Photobacterium profundum (strain SS9).